Here is a 153-residue protein sequence, read N- to C-terminus: SsrA-binding protein (153 aa).

The protein belongs to the SmpB family.

Its subcellular location is the cytoplasm. In terms of biological role, required for rescue of stalled ribosomes mediated by trans-translation. Binds to transfer-messenger RNA (tmRNA), required for stable association of tmRNA with ribosomes. tmRNA and SmpB together mimic tRNA shape, replacing the anticodon stem-loop with SmpB. tmRNA is encoded by the ssrA gene; the 2 termini fold to resemble tRNA(Ala) and it encodes a 'tag peptide', a short internal open reading frame. During trans-translation Ala-aminoacylated tmRNA acts like a tRNA, entering the A-site of stalled ribosomes, displacing the stalled mRNA. The ribosome then switches to translate the ORF on the tmRNA; the nascent peptide is terminated with the 'tag peptide' encoded by the tmRNA and targeted for degradation. The ribosome is freed to recommence translation, which seems to be the essential function of trans-translation. The protein is SsrA-binding protein of Macrococcus caseolyticus (strain JCSC5402) (Macrococcoides caseolyticum).